Consider the following 341-residue polypeptide: Anthranilate phosphoribosyltransferase (341 aa).

5-phospho-alpha-D-ribose 1-diphosphate is bound by residues G80, 83–84, T88, 90–93, 108–116, and S120; these read GD, NIST, and KHGNRAVSS. G80 contacts anthranilate. S92 serves as a coordination point for Mg(2+). N111 contacts anthranilate. An anthranilate-binding site is contributed by R166. D225 and E226 together coordinate Mg(2+).

It belongs to the anthranilate phosphoribosyltransferase family. In terms of assembly, homodimer. The cofactor is Mg(2+).

It catalyses the reaction N-(5-phospho-beta-D-ribosyl)anthranilate + diphosphate = 5-phospho-alpha-D-ribose 1-diphosphate + anthranilate. It functions in the pathway amino-acid biosynthesis; L-tryptophan biosynthesis; L-tryptophan from chorismate: step 2/5. Functionally, catalyzes the transfer of the phosphoribosyl group of 5-phosphorylribose-1-pyrophosphate (PRPP) to anthranilate to yield N-(5'-phosphoribosyl)-anthranilate (PRA). The chain is Anthranilate phosphoribosyltransferase from Brevibacillus brevis (strain 47 / JCM 6285 / NBRC 100599).